The primary structure comprises 115 residues: Migration and invasion enhancer 1 (115 aa).

Ser-2 carries the post-translational modification N-acetylserine. Cys-30 and Cys-33 are joined by a disulfide. Cys-112 carries S-geranylgeranyl cysteine lipidation. Residues 113–115 constitute a propeptide, removed in mature form; sequence VIL.

The protein belongs to the SelWTH family. In terms of assembly, interacts with GPX1. Post-translationally, isoprenylation facilitates association with the plasma membrane and enhances the migratory phenotype of cells by inducing increased filopodia formation. Widely expressed with highest levels in kidney followed by brain and testis.

The protein localises to the cytoplasm. Its subcellular location is the cytosol. It localises to the cell membrane. Functionally, increases cell migration by inducing filopodia formation at the leading edge of migrating cells. Plays a role in regulation of apoptosis, possibly through control of CASP3. May be involved in a redox-related process. The protein is Migration and invasion enhancer 1 (Mien1) of Mus musculus (Mouse).